A 29-amino-acid polypeptide reads, in one-letter code: MDILSISWAFLMVVFTFSLSLVVWGRSGL.

Residues 3–23 traverse the membrane as a helical segment; that stretch reads ILSISWAFLMVVFTFSLSLVV.

Belongs to the PetN family. As to quaternary structure, the 4 large subunits of the cytochrome b6-f complex are cytochrome b6, subunit IV (17 kDa polypeptide, PetD), cytochrome f and the Rieske protein, while the 4 small subunits are PetG, PetL, PetM and PetN. The complex functions as a dimer.

The protein resides in the plastid. Its subcellular location is the chloroplast thylakoid membrane. Functionally, component of the cytochrome b6-f complex, which mediates electron transfer between photosystem II (PSII) and photosystem I (PSI), cyclic electron flow around PSI, and state transitions. The chain is Cytochrome b6-f complex subunit 8 from Chara vulgaris (Common stonewort).